A 171-amino-acid polypeptide reads, in one-letter code: MENKLIELIETYNDFPRKGIEFKDVLGIIQEPKIFKELILKMSSSQIIRNAEAIISIDARGFIFGSAISLEASKPMIVARKPGKLPGELSKKKYSLEYGENSLSIQKKCLQKYNSYAIVDDLLATGGTVSCVSKLLESNGKEVLGLLVVVELMKLKGRFKLKFPVESSITF.

This sequence belongs to the purine/pyrimidine phosphoribosyltransferase family. As to quaternary structure, homodimer.

Its subcellular location is the cytoplasm. The catalysed reaction is AMP + diphosphate = 5-phospho-alpha-D-ribose 1-diphosphate + adenine. It participates in purine metabolism; AMP biosynthesis via salvage pathway; AMP from adenine: step 1/1. In terms of biological role, catalyzes a salvage reaction resulting in the formation of AMP, that is energically less costly than de novo synthesis. The sequence is that of Adenine phosphoribosyltransferase from Prochlorococcus marinus (strain MIT 9515).